The following is a 189-amino-acid chain: Xanthine phosphoribosyltransferase (189 aa).

Xanthine contacts are provided by L20 and N27. 128 to 132 (ANGKA) provides a ligand contact to 5-phospho-alpha-D-ribose 1-diphosphate. A xanthine-binding site is contributed by K156.

The protein belongs to the purine/pyrimidine phosphoribosyltransferase family. Xpt subfamily. Homodimer.

The protein localises to the cytoplasm. The enzyme catalyses XMP + diphosphate = xanthine + 5-phospho-alpha-D-ribose 1-diphosphate. Its pathway is purine metabolism; XMP biosynthesis via salvage pathway; XMP from xanthine: step 1/1. In terms of biological role, converts the preformed base xanthine, a product of nucleic acid breakdown, to xanthosine 5'-monophosphate (XMP), so it can be reused for RNA or DNA synthesis. The polypeptide is Xanthine phosphoribosyltransferase (Pseudomonas syringae pv. syringae (strain B728a)).